The chain runs to 360 residues: MLYHLLTPLAKYMTVFNVFRYITFRTIYASLTALVISFVLGPWLIRKLGEMQVGQHIREDGPQTHLKKAGTPTMGGVLIMSAVMFSTLLWADLTNAYVWIALGVTFGFGLIGFVDDYLMQVKKRSKGLSARGKFCLQVVVAGIAGTVLVYGLNGDTTVNIPFFKNLNPDLTRPGYVLFAILVMVGASNAVNLTDGLDGLAIVPVAIAAGTYMIFAYVASHYDFATYLSIRHVPQSGEMSVFCGALVGAGLGFLWYNAYPAQIFMGDVGSLPLGGALGVVAILTKQELALVIVGGLFVMEAVSVILQVSFFKITKGKRIFKMAPIHHHFELKGWPEPKVIVRFWIIAIMLALLSVSTLKLR.

Transmembrane regions (helical) follow at residues 25 to 45 (RTIY…PWLI), 73 to 93 (TMGG…WADL), 94 to 114 (TNAY…IGFV), 134 to 154 (FCLQ…GLNG), 173 to 193 (PGYV…VNLT), 198 to 218 (GLAI…AYVA), 240 to 260 (VFCG…AYPA), 262 to 282 (IFMG…VAIL), 287 to 307 (LALV…ILQV), and 337 to 357 (KVIV…VSTL).

This sequence belongs to the glycosyltransferase 4 family. MraY subfamily. Mg(2+) is required as a cofactor.

It is found in the cell inner membrane. The catalysed reaction is UDP-N-acetyl-alpha-D-muramoyl-L-alanyl-gamma-D-glutamyl-meso-2,6-diaminopimeloyl-D-alanyl-D-alanine + di-trans,octa-cis-undecaprenyl phosphate = di-trans,octa-cis-undecaprenyl diphospho-N-acetyl-alpha-D-muramoyl-L-alanyl-D-glutamyl-meso-2,6-diaminopimeloyl-D-alanyl-D-alanine + UMP. It participates in cell wall biogenesis; peptidoglycan biosynthesis. In terms of biological role, catalyzes the initial step of the lipid cycle reactions in the biosynthesis of the cell wall peptidoglycan: transfers peptidoglycan precursor phospho-MurNAc-pentapeptide from UDP-MurNAc-pentapeptide onto the lipid carrier undecaprenyl phosphate, yielding undecaprenyl-pyrophosphoryl-MurNAc-pentapeptide, known as lipid I. The polypeptide is Phospho-N-acetylmuramoyl-pentapeptide-transferase (Desulfatibacillum aliphaticivorans).